The sequence spans 312 residues: Aspartate carbamoyltransferase catalytic subunit (312 aa).

2 residues coordinate carbamoyl phosphate: Arg-58 and Thr-59. L-aspartate is bound at residue Lys-86. Residues Arg-108, His-136, and Gln-139 each contribute to the carbamoyl phosphate site. L-aspartate is bound by residues Arg-169 and Arg-223. Gly-264 and Pro-265 together coordinate carbamoyl phosphate.

Belongs to the aspartate/ornithine carbamoyltransferase superfamily. ATCase family. In terms of assembly, heterododecamer (2C3:3R2) of six catalytic PyrB chains organized as two trimers (C3), and six regulatory PyrI chains organized as three dimers (R2).

The catalysed reaction is carbamoyl phosphate + L-aspartate = N-carbamoyl-L-aspartate + phosphate + H(+). Its pathway is pyrimidine metabolism; UMP biosynthesis via de novo pathway; (S)-dihydroorotate from bicarbonate: step 2/3. Its function is as follows. Catalyzes the condensation of carbamoyl phosphate and aspartate to form carbamoyl aspartate and inorganic phosphate, the committed step in the de novo pyrimidine nucleotide biosynthesis pathway. This is Aspartate carbamoyltransferase catalytic subunit from Endomicrobium trichonymphae.